We begin with the raw amino-acid sequence, 167 residues long: MKRVVTLVSKEQAEVGHRFRVFSVPDECKSCRLFSVCLGRLTPGRSYKVVEVRPSMGQRCKITDSEMVPVVVEEAPIVGLLPLNKALEGVVVTYEDECAGCEGCPNDVVKKGEKVKVVKILGRKKCRNKEFAIVEFFVVSAPSHAVLDSSKTAQAPSRAPSSRRPLK.

This sequence belongs to the UPF0179 family.

The chain is UPF0179 protein Pars_2336 from Pyrobaculum arsenaticum (strain DSM 13514 / JCM 11321 / PZ6).